The following is a 160-amino-acid chain: GPI-anchored protein LLG3 (160 aa).

The N-terminal stretch at 1–23 is a signal peptide; the sequence is MKITHHCLVSLLSILLLSGFAFS. Residue asparagine 56 is glycosylated (N-linked (GlcNAc...) asparagine). The GPI-anchor amidated serine moiety is linked to residue serine 137. A propeptide spans 138-160 (removed in mature form); it reads HASIPLVSTHVLLITVSILFHLF.

Expressed in pollen, pollen tubes, sporophytic pistil tissues, in the early stages of female gametophyte development, and in unfertilized, mature ovules.

Its subcellular location is the cell membrane. The polypeptide is GPI-anchored protein LLG3 (Arabidopsis thaliana (Mouse-ear cress)).